A 241-amino-acid chain; its full sequence is Biosynthetic peptidoglycan transglycosylase (241 aa).

Residues 18–38 (GVIGIIALWMAGILIFAFLPV) form a helical membrane-spanning segment.

The protein belongs to the glycosyltransferase 51 family.

The protein localises to the cell inner membrane. The enzyme catalyses [GlcNAc-(1-&gt;4)-Mur2Ac(oyl-L-Ala-gamma-D-Glu-L-Lys-D-Ala-D-Ala)](n)-di-trans,octa-cis-undecaprenyl diphosphate + beta-D-GlcNAc-(1-&gt;4)-Mur2Ac(oyl-L-Ala-gamma-D-Glu-L-Lys-D-Ala-D-Ala)-di-trans,octa-cis-undecaprenyl diphosphate = [GlcNAc-(1-&gt;4)-Mur2Ac(oyl-L-Ala-gamma-D-Glu-L-Lys-D-Ala-D-Ala)](n+1)-di-trans,octa-cis-undecaprenyl diphosphate + di-trans,octa-cis-undecaprenyl diphosphate + H(+). It participates in cell wall biogenesis; peptidoglycan biosynthesis. Its function is as follows. Peptidoglycan polymerase that catalyzes glycan chain elongation from lipid-linked precursors. This chain is Biosynthetic peptidoglycan transglycosylase, found in Yersinia pseudotuberculosis serotype O:1b (strain IP 31758).